We begin with the raw amino-acid sequence, 650 residues long: Glycoprotein antigen BM86 (650 aa).

The signal sequence occupies residues Met1–Ala19. EGF-like domains are found at residues Glu20–Glu66 and Tyr67–Lys104. Intrachain disulfides connect Cys24–Cys37, Cys32–Cys49, Cys51–Cys65, Cys71–Cys81, Cys76–Cys91, and Cys93–Cys103. Residues Asn141 and Asn182 are each glycosylated (N-linked (GlcNAc...) asparagine). 3 consecutive EGF-like domains span residues Cys205–Lys247, His251–Ile292, and Cys291–Leu335. Disulfide bonds link Cys209-Cys222, Cys218-Cys231, Cys233-Cys246, Cys255-Cys269, Cys263-Cys278, Cys280-Cys291, Cys295-Cys307, Cys300-Cys316, and Cys318-Cys334. 2 N-linked (GlcNAc...) asparagine glycosylation sites follow: Asn348 and Asn382. 2 consecutive EGF-like domains span residues Arg482–Ile530 and Glu531–Tyr568. Cystine bridges form between Cys486-Cys500, Cys492-Cys516, Cys518-Cys529, Cys535-Cys550, Cys543-Cys559, and Cys561-Cys567. Positions Lys603 to Ala628 are disordered. Ser627 is lipidated: GPI-anchor amidated serine. A propeptide spans Ala628–Leu650 (removed in mature form).

It localises to the cell membrane. In Rhipicephalus microplus (Cattle tick), this protein is Glycoprotein antigen BM86.